The chain runs to 54 residues: Ovomucoid (54 aa).

The Kazal-like domain occupies 4-54 (VDCSDYPKPVCSLDYMPLCGSDNTTYNNKCIFCNAVVDSNGTITLSHFGKC). 3 cysteine pairs are disulfide-bonded: C6/C36, C14/C33, and C22/C54. A glycan (N-linked (GlcNAc...) asparagine) is linked at N43.

Its subcellular location is the secreted. The sequence is that of Ovomucoid from Haemorhous mexicanus (House finch).